Here is a 127-residue protein sequence, read N- to C-terminus: Large ribosomal subunit protein bL20 (127 aa).

Belongs to the bacterial ribosomal protein bL20 family.

In terms of biological role, binds directly to 23S ribosomal RNA and is necessary for the in vitro assembly process of the 50S ribosomal subunit. It is not involved in the protein synthesizing functions of that subunit. The polypeptide is Large ribosomal subunit protein bL20 (Renibacterium salmoninarum (strain ATCC 33209 / DSM 20767 / JCM 11484 / NBRC 15589 / NCIMB 2235)).